The primary structure comprises 273 residues: Peptidyl-prolyl cis-trans isomerase E (273 aa).

Positions 1–48 (MPMDYQTEKHRGFAFVEFEEVEDAMSAIDNMNESEIFGRTIRVNVARP) constitute an RRM domain. A disordered region spans residues 77–103 (RKLDEPDIVNPSDTSENVEDLSDEEMR). In terms of domain architecture, PPIase cyclophilin-type spans 115 to 271 (FFDIRIGNGD…EPVIISRCGE (157 aa)).

The protein belongs to the cyclophilin-type PPIase family. PPIase E subfamily.

The protein localises to the cytoplasm. It catalyses the reaction [protein]-peptidylproline (omega=180) = [protein]-peptidylproline (omega=0). With respect to regulation, binds cyclosporin A (CsA). CsA mediates some of its effects via an inhibitory action on PPIase. In terms of biological role, PPIases accelerate the folding of proteins. It catalyzes the cis-trans isomerization of proline imidic peptide bonds in oligopeptides. This Schistosoma mansoni (Blood fluke) protein is Peptidyl-prolyl cis-trans isomerase E.